The primary structure comprises 116 residues: MQTITILALIACVAVPIFADFDHLRARRDVVESSGEGSGESSGEKPVVESSGEGSGESSGDKEAVEASGEGSGEGSGDATLESSGEGSGESHNAVVASDSPKDVKALTANEFAVSV.

The N-terminal stretch at 1–19 (MQTITILALIACVAVPIFA) is a signal peptide. Residues 29–102 (DVVESSGEGS…NAVVASDSPK (74 aa)) are disordered. Low complexity-rich tracts occupy residues 32-41 (ESSGEGSGES) and 48-58 (VESSGEGSGES). Residues Ser-68, Ser-72, Ser-76, Ser-84, and Ser-88 are each glycosylated (O-linked (Xyl...) (chondroitin sulfate) serine).

In Caenorhabditis elegans, this protein is Chondroitin proteoglycan 7.